A 207-amino-acid polypeptide reads, in one-letter code: ATP-dependent Clp protease proteolytic subunit (207 aa).

The active-site Nucleophile is serine 111. Histidine 136 is an active-site residue.

This sequence belongs to the peptidase S14 family. In terms of assembly, fourteen ClpP subunits assemble into 2 heptameric rings which stack back to back to give a disk-like structure with a central cavity, resembling the structure of eukaryotic proteasomes.

It is found in the cytoplasm. The catalysed reaction is Hydrolysis of proteins to small peptides in the presence of ATP and magnesium. alpha-casein is the usual test substrate. In the absence of ATP, only oligopeptides shorter than five residues are hydrolyzed (such as succinyl-Leu-Tyr-|-NHMec, and Leu-Tyr-Leu-|-Tyr-Trp, in which cleavage of the -Tyr-|-Leu- and -Tyr-|-Trp bonds also occurs).. Cleaves peptides in various proteins in a process that requires ATP hydrolysis. Has a chymotrypsin-like activity. Plays a major role in the degradation of misfolded proteins. The sequence is that of ATP-dependent Clp protease proteolytic subunit from Yersinia pseudotuberculosis serotype O:1b (strain IP 31758).